The chain runs to 146 residues: Prolactin-inducible protein homolog (146 aa).

The signal sequence occupies residues 1 to 28; sequence MRLLQLLFRASPATLLLVLCLQLGANKA. Pyrrolidone carboxylic acid is present on glutamine 29. Disulfide bonds link cysteine 65-cysteine 91 and cysteine 89-cysteine 123. N-linked (GlcNAc...) asparagine glycosylation occurs at asparagine 105.

Belongs to the PIP family. Monomer. Interacts with AZGP1.

The protein resides in the secreted. This Gorilla gorilla gorilla (Western lowland gorilla) protein is Prolactin-inducible protein homolog (PIP).